The chain runs to 100 residues: Small ribosomal subunit protein uS14c (100 aa).

It belongs to the universal ribosomal protein uS14 family. In terms of assembly, part of the 30S ribosomal subunit.

Its subcellular location is the plastid. It is found in the chloroplast. Functionally, binds 16S rRNA, required for the assembly of 30S particles. The protein is Small ribosomal subunit protein uS14c of Porphyra purpurea (Red seaweed).